A 921-amino-acid chain; its full sequence is Sodium/calcium exchanger 2 (921 aa).

Residues 1-20 (MAPLALVGVALLLGAPHCLG) form the signal peptide. The Extracellular portion of the chain corresponds to 21-68 (EATPTPSLPPPPANDSDASPGGCQGSYRCQPGVLLPVWEPDDPSLGDK). The disordered stretch occupies residues 23-42 (TPTPSLPPPPANDSDASPGG). N34 carries N-linked (GlcNAc...) asparagine glycosylation. A helical membrane pass occupies residues 69 to 90 (AARAVVYFVAMVYMFLGLSIIA). The Cytoplasmic portion of the chain corresponds to 91 to 130 (DRFMASIEVITSKEKEITITKANGETSVGTVRIWNETVSN). The chain crosses the membrane as a helical span at residues 131 to 152 (LTLMALGSSAPEILLSVIEVCG). One copy of the Alpha-1 repeat lies at 135-175 (ALGSSAPEILLSVIEVCGHNFQAGELGPGTIVGSAAFNMFV). Topologically, residues 153 to 164 (HNFQAGELGPGT) are extracellular. Residues 165-185 (IVGSAAFNMFVVIAVCVYVIP) form a helical membrane-spanning segment. The Cytoplasmic portion of the chain corresponds to 186-196 (AGESRKIKHLR). Residues 197 to 219 (VFFVTASWSIFAYVWLYLILAVF) form a helical membrane-spanning segment. Over 220–222 (SPG) the chain is Extracellular. A helical transmembrane segment spans residues 223-246 (VVQVWEALLTLVFFPVCVVFAWMA). Topologically, residues 247–720 (DKRLLFYKYV…DGSREERLPS (474 aa)) are cytoplasmic. Positions 248–267 (KRLLFYKYVYKRYRTDPRSG) are putative calmodulin-binding region. Positions 372–391 (AADAARRPGANDGAPDDEDD) are disordered. 2 consecutive Calx-beta domains span residues 384–483 (GAPD…VRLL) and 512–612 (ATVT…IELG). E407, D443, D468, D469, I471, E473, E476, D518, D519, D520, E536, D598, E599, and E600 together coordinate Ca(2+). S622 is subject to Phosphoserine. E665 is a Ca(2+) binding site. The helical transmembrane segment at 721-740 (CFDYVMHFLTVFWKVLFACL) threads the bilayer. The Extracellular portion of the chain corresponds to 741 to 747 (PPTEYCH). The chain crosses the membrane as a helical span at residues 748–770 (GWACFGVCILVIGLLTALIGDLA). Topologically, residues 771 to 772 (SH) are cytoplasmic. The chain crosses the membrane as a helical span at residues 773-791 (FGCTVGLKDSVNAVVFVAL). The stretch at 790-826 (ALGTSIPDTFASKVAALQDQCADASIGNVTGSNAVNV) is one Alpha-2 repeat. Over 792-822 (GTSIPDTFASKVAALQDQCADASIGNVTGSN) the chain is Extracellular. Residue N817 is glycosylated (N-linked (GlcNAc...) asparagine). A helical transmembrane segment spans residues 823–843 (AVNVFLGLGVAWSVAAVYWAV). Over 844 to 854 (QGRPFEVRTGT) the chain is Cytoplasmic. A helical transmembrane segment spans residues 855 to 875 (LAFSVTLFTVFAFVGIAVLLY). Topologically, residues 876–892 (RRRPHIGGELGGPRGPK) are extracellular. A helical membrane pass occupies residues 893–909 (LATTALFLGLWFLYILF). Residues 910–921 (ASLEAYCHIRGF) lie on the Cytoplasmic side of the membrane.

This sequence belongs to the Ca(2+):cation antiporter (CaCA) (TC 2.A.19) family. SLC8 subfamily. As to expression, detected in neocortex and hippocampus on pyramidal cells, astrocyte processes and dendrites (at protein level). Brain and skeletal muscle.

It is found in the cell membrane. It localises to the basolateral cell membrane. Its subcellular location is the perikaryon. The protein localises to the cell projection. The protein resides in the dendrite. It is found in the dendritic spine. It catalyses the reaction Ca(2+)(in) + 3 Na(+)(out) = Ca(2+)(out) + 3 Na(+)(in). Calcium transport is down-regulated by Na(+) and stimulated by Ca(2+). Mediates the electrogenic exchange of Ca(2+) against Na(+) ions across the cell membrane, and thereby contributes to the regulation of cytoplasmic Ca(2+) levels and Ca(2+)-dependent cellular processes. Contributes to cellular Ca(2+) homeostasis in excitable cells. Contributes to the rapid decrease of cytoplasmic Ca(2+) levels back to baseline after neuronal activation, and thereby contributes to modulate synaptic plasticity, learning and memory. Plays a role in regulating urinary Ca(2+) and Na(+) excretion. This Rattus norvegicus (Rat) protein is Sodium/calcium exchanger 2 (Slc8a2).